The chain runs to 228 residues: MGVTGMTYMFTMVFSLIVLILSSSTVGYDYFQFTQQYQPAVCNSNPTPCNDPTDKLFTVHGLWPSNRNGPDPEKCKTTALNSQKIGNMTAQLEIIWPNVLNRSDHVGFWEKEWIKHGTCGYPTIKDDMHYLQTVIRMYITQKQNVSAILSKAAIQPNGTNRPLVDIENAIRRGTNNTKPKFKCQKNTRTTTELVEVTLCSDRDLKKFINCPHGPPQGSRFSCPSSVQY.

The N-terminal stretch at 1–27 (MGVTGMTYMFTMVFSLIVLILSSSTVG) is a signal peptide. Position 36 (Gln36) interacts with RNA. Cys42 and Cys49 are disulfide-bonded. Residue His60 participates in RNA binding. Catalysis depends on His60, which acts as the Proton donor. Cys75 and Cys119 are disulfide-bonded. Asn87 is a glycosylation site (N-linked (GlcNAc...) asparagine). 98-99 (NV) contributes to the RNA binding site. N-linked (GlcNAc...) asparagine glycosylation is present at Asn101. RNA-binding positions include Phe108, 111 to 112 (KE), and 115 to 116 (KH). Glu112 is an active-site residue. The active-site Proton acceptor is the His116. N-linked (GlcNAc...) asparagine glycans are attached at residues Asn144, Asn157, and Asn175. Intrachain disulfides connect Cys183/Cys222 and Cys199/Cys210.

Belongs to the RNase T2 family. In terms of processing, N-linked core structure at Asn-87 and Asn-101 contains xylose and fucose or consists of disaccharide (GlcNAc-GlcNAc). N-linked core structure at Asn-144 contains xylose.

It catalyses the reaction a ribonucleotidyl-ribonucleotide-RNA + H2O = a 3'-end 3'-phospho-ribonucleotide-RNA + a 5'-end dephospho-ribonucleoside-RNA + H(+). Its function is as follows. Self-incompatibility (SI) is the inherited ability of a flowering plant to prevent self-fertilization by discriminating between self and non-self pollen during pollination. In many species, self-incompatibility is controlled by the single, multiallelic locus S. In Pyrus pyrifolia (Chinese pear), this protein is Ribonuclease S-1.